We begin with the raw amino-acid sequence, 990 residues long: Aconitate hydratase 3, mitochondrial (990 aa).

The N-terminal 78 residues, 1–78 (MYLTASSSAS…PFRFTSQIRA (78 aa)), are a transit peptide targeting the mitochondrion. Phosphoserine is present on Ser91. Substrate contacts are provided by residues Gln182 and 301–303 (DSH). [4Fe-4S] cluster-binding residues include Cys533, Cys599, and Cys602. Substrate contacts are provided by residues Arg632, Arg637, Arg795, and 876 to 877 (SR).

Belongs to the aconitase/IPM isomerase family. In terms of assembly, monomer. Interacts with B'GAMMA in the cytosol. The cofactor is [4Fe-4S] cluster. Phosphorylated at Ser-91 in the cytoplasm; this phosphorylation requires the presence of B'GAMMA. As to expression, major aconitase isoenzyme in young seedlings. Expressed in roots, leaves, stems and flowers, and, at low levels, in seeds.

It localises to the mitochondrion. It is found in the cytoplasm. It carries out the reaction citrate = D-threo-isocitrate. The protein operates within carbohydrate metabolism; tricarboxylic acid cycle; isocitrate from oxaloacetate: step 2/2. Catalyzes the isomerization of citrate to isocitrate via cis-aconitate. Contributes to oxidative stress tolerance. Modulates cytosolic citrate metabolism during lipid mobilization. Required during seedling growth. This Arabidopsis thaliana (Mouse-ear cress) protein is Aconitate hydratase 3, mitochondrial.